The chain runs to 319 residues: MSDVVQDELSKKQTTRLNKLQKRLRREVGSAIADYNMIEEGDRVMCCLSGGKDSYAMLDILINLQQRAPVSFEIVAVNLDQKQPGFPEHVLPAYLETLGVPFHILEKDTYSIVKDKIPEGKTTCSLCSRLRRGTLYGFAQRIGATKIALGHHRDDIIETLFLNMFYGGKMKAMPPKLLSDDGANVVIRPLAYCREKDIAEYAELKQFPIIPCNLCGSQENLKRAAVKDMLKQWDRQHPGRIETIFTAMQNTAPSQGVDREQFDFVSLKQDPNAEFRGDVAEADLPAFDFMDTANSGHINLDDASKRQGTRIDVVSTFTP.

A PP-loop motif motif is present at residues 49–54; it reads SGGKDS. Cys124, Cys127, and Cys215 together coordinate [4Fe-4S] cluster.

The protein belongs to the TtcA family. In terms of assembly, homodimer. Mg(2+) is required as a cofactor. [4Fe-4S] cluster serves as cofactor.

The protein resides in the cytoplasm. It carries out the reaction cytidine(32) in tRNA + S-sulfanyl-L-cysteinyl-[cysteine desulfurase] + AH2 + ATP = 2-thiocytidine(32) in tRNA + L-cysteinyl-[cysteine desulfurase] + A + AMP + diphosphate + H(+). The protein operates within tRNA modification. In terms of biological role, catalyzes the ATP-dependent 2-thiolation of cytidine in position 32 of tRNA, to form 2-thiocytidine (s(2)C32). The sulfur atoms are provided by the cysteine/cysteine desulfurase (IscS) system. This Shewanella amazonensis (strain ATCC BAA-1098 / SB2B) protein is tRNA-cytidine(32) 2-sulfurtransferase.